The sequence spans 105 residues: Large ribosomal subunit protein uL24 (105 aa).

It belongs to the universal ribosomal protein uL24 family. Part of the 50S ribosomal subunit.

Functionally, one of two assembly initiator proteins, it binds directly to the 5'-end of the 23S rRNA, where it nucleates assembly of the 50S subunit. Its function is as follows. One of the proteins that surrounds the polypeptide exit tunnel on the outside of the subunit. The polypeptide is Large ribosomal subunit protein uL24 (Francisella philomiragia subsp. philomiragia (strain ATCC 25017 / CCUG 19701 / FSC 153 / O#319-036)).